The following is a 738-amino-acid chain: Leucine-rich repeat flightless-interacting protein 1 (738 aa).

Thr-2 carries the post-translational modification N-acetylthreonine. Ser-16 is subject to Phosphoserine. Residues 40–65 (IRMKELERQQKEVEERPDKDFAEKGS) show a composition bias toward basic and acidic residues. Residues 40 to 98 (IRMKELERQQKEVEERPDKDFAEKGSRNMPSLSAATLASLGGTSSRRGSGDTSISMDTE) are disordered. The span at 78–94 (SLGGTSSRRGSGDTSIS) shows a compositional bias: low complexity. Phosphoserine occurs at positions 83, 84, 88, and 92. The stretch at 94 to 194 (SMDTEASIRE…LRQREEMLEK (101 aa)) forms a coiled coil. Lys-249 is covalently cross-linked (Glycyl lysine isopeptide (Lys-Gly) (interchain with G-Cter in SUMO1)). Basic and acidic residues-rich tracts occupy residues 253-262 (VEKVGQRETL) and 277-297 (DCVDRGVLHPGEKAENQRPVE). The disordered stretch occupies residues 253-738 (VEKVGQRETL…SKSKEDCTMS (486 aa)). Ser-302 carries the post-translational modification Phosphoserine. A compositionally biased stretch (polar residues) spans 314–326 (EVQSQDQENTSIL). The span at 330–347 (EQIESHEVTNKSDSRDSN) shows a compositional bias: basic and acidic residues. Phosphoserine occurs at positions 346 and 348. Positions 371 to 380 (KNQSENSMDS) are enriched in polar residues. Composition is skewed to basic and acidic residues over residues 381–400 (QGKENQEDLGKGSFEPRPDH) and 467–476 (SERELAHEAA). The DNA-binding stretch occupies residues 479–580 (EEALTQSSQA…KNKKKKAAAP (102 aa)). 2 stretches are compositionally biased toward polar residues: residues 483-495 (TQSSQAGGENTVT) and 520-534 (TVQSGHQDTTGPGST). Positions 535–553 (DTKHTSPHAKERNKAKSEQ) are enriched in basic and acidic residues. Phosphoserine is present on residues Ser-551 and Ser-560. Over residues 563 to 577 (KKTKNKKKKNKKKKA) the composition is skewed to basic residues. Over residues 606 to 626 (RVQATDKKWAAETPELKEDPQ) the composition is skewed to basic and acidic residues. A phosphoserine mark is found at Ser-675 and Ser-701. Basic and acidic residues-rich tracts occupy residues 691–703 (QADEKGIEGHSVD) and 720–738 (EQAREEVGNSKSKEDCTMS).

The protein belongs to the LRRFIP family. In terms of assembly, homodimer. May also form higher oligomers. Interacts with FLII. Interacts with MYD88. Competes with FLII for MyD88-binding, even in the absence of LPS.

It localises to the nucleus. The protein resides in the cytoplasm. In terms of biological role, transcriptional repressor which preferentially binds to the GC-rich consensus sequence (5'-AGCCCCCGGCG-3') and may regulate expression of TNF, EGFR and PDGFA. May control smooth muscle cells proliferation following artery injury through PDGFA repression. May also bind double-stranded RNA. Positively regulates Toll-like receptor (TLR) signaling in response to agonist probably by competing with the negative FLII regulator for MYD88-binding. The polypeptide is Leucine-rich repeat flightless-interacting protein 1 (Lrrfip1) (Rattus norvegicus (Rat)).